Consider the following 160-residue polypeptide: Protein FrzA (160 aa).

The CheW-like domain maps to 14 to 155 (EQEFFCFRVG…FSKLLQTARQ (142 aa)).

Necessary for proper aggregation of cells to form fruiting bodies. FRZ genes define a system of signal transduction analogous to the enterobacterial chemotaxis systems. This chain is Protein FrzA (frzA), found in Myxococcus xanthus.